Here is a 365-residue protein sequence, read N- to C-terminus: N5-carboxyaminoimidazole ribonucleotide synthase (365 aa).

ATP-binding positions include R93, K132, 137-143, 168-171, E176, H199, and 249-250; these read GYDGKGQ, EEFV, and NE. Positions 97–279 constitute an ATP-grasp domain; sequence KLFLKKHGFP…QFENLLRAIT (183 aa).

Belongs to the PurK/PurT family. As to quaternary structure, homodimer.

It carries out the reaction 5-amino-1-(5-phospho-beta-D-ribosyl)imidazole + hydrogencarbonate + ATP = 5-carboxyamino-1-(5-phospho-D-ribosyl)imidazole + ADP + phosphate + 2 H(+). It functions in the pathway purine metabolism; IMP biosynthesis via de novo pathway; 5-amino-1-(5-phospho-D-ribosyl)imidazole-4-carboxylate from 5-amino-1-(5-phospho-D-ribosyl)imidazole (N5-CAIR route): step 1/2. In terms of biological role, catalyzes the ATP-dependent conversion of 5-aminoimidazole ribonucleotide (AIR) and HCO(3)(-) to N5-carboxyaminoimidazole ribonucleotide (N5-CAIR). The sequence is that of N5-carboxyaminoimidazole ribonucleotide synthase from Aquifex aeolicus (strain VF5).